Consider the following 298-residue polypeptide: ADP/ATP translocase 1 (298 aa).

The Mitochondrial intermembrane portion of the chain corresponds to M1–S7. At S2 the chain carries N-acetylserine. One copy of the Solcar 1 repeat lies at L6–I98. S7 is subject to Phosphoserine. The chain crosses the membrane as a helical span at residues F8–Q37. At V38–N74 the chain is on the mitochondrial matrix side. K52 bears the N6,N6,N6-trimethyllysine mark. A helical membrane pass occupies residues L75 to F99. ADP is bound by residues R80 and K92. Topologically, residues L100–F109 are mitochondrial intermembrane. A helical transmembrane segment spans residues W110–F130. Solcar repeat units lie at residues R111–M201 and V212–Y297. At V131–N178 the chain is on the mitochondrial matrix side. K147 is modified (N6-succinyllysine). C160 bears the S-nitrosocysteine mark. The helical transmembrane segment at V179–K199 threads the bilayer. The Mitochondrial intermembrane portion of the chain corresponds to G200–I210. A helical membrane pass occupies residues I211–F231. The Mitochondrial matrix segment spans residues D232–G273. Position 235 (R235) interacts with ADP. The interval R235–M240 is important for transport activity. A Nucleotide carrier signature motif motif is present at residues R235–M240. K245 and K272 each carry N6-succinyllysine. The helical transmembrane segment at A274–Y291 threads the bilayer. The Mitochondrial intermembrane portion of the chain corresponds to D292 to V298.

The protein belongs to the mitochondrial carrier (TC 2.A.29) family. In terms of assembly, monomer. Found in a complex with ARL2, ARL2BP and SLC25A4/ANT1. Interacts with ARL2BP. Interacts with TIMM44; leading to inhibit the presequence translocase TIMM23, thereby promoting stabilization of PINK1. In terms of processing, under cell death induction, transglutaminated by TGM2. Transglutamination leads to formation of covalent cross-links between a glutamine and the epsilon-amino group of a lysine residue, forming polymers.

The protein resides in the mitochondrion inner membrane. The protein localises to the membrane. The enzyme catalyses ADP(in) + ATP(out) = ADP(out) + ATP(in). It catalyses the reaction H(+)(in) = H(+)(out). Its activity is regulated as follows. The matrix-open state (m-state) is inhibited by the membrane-permeable bongkrekic acid (BKA). The cytoplasmic-open state (c-state) is inhibited by the membrane-impermeable toxic inhibitor carboxyatractyloside (CATR). Proton transporter activity is inhibited by ADP:ATP antiporter activity. ADP:ATP antiporter that mediates import of ADP into the mitochondrial matrix for ATP synthesis, and export of ATP out to fuel the cell. Cycles between the cytoplasmic-open state (c-state) and the matrix-open state (m-state): operates by the alternating access mechanism with a single substrate-binding site intermittently exposed to either the cytosolic (c-state) or matrix (m-state) side of the inner mitochondrial membrane. In addition to its ADP:ATP antiporter activity, also involved in mitochondrial uncoupling and mitochondrial permeability transition pore (mPTP) activity. Plays a role in mitochondrial uncoupling by acting as a proton transporter: proton transport uncouples the proton flows via the electron transport chain and ATP synthase to reduce the efficiency of ATP production and cause mitochondrial thermogenesis. Proton transporter activity is inhibited by ADP:ATP antiporter activity, suggesting that SLC25A4/ANT1 acts as a master regulator of mitochondrial energy output by maintaining a delicate balance between ATP production (ADP:ATP antiporter activity) and thermogenesis (proton transporter activity). Proton transporter activity requires free fatty acids as cofactor, but does not transport it. Probably mediates mitochondrial uncoupling in tissues that do not express UCP1. Also plays a key role in mPTP opening, a non-specific pore that enables free passage of the mitochondrial membranes to solutes of up to 1.5 kDa, and which contributes to cell death. It is however unclear if SLC25A4/ANT1 constitutes a pore-forming component of mPTP or regulates it. Acts as a regulator of mitophagy independently of ADP:ATP antiporter activity: promotes mitophagy via interaction with TIMM44, leading to inhibit the presequence translocase TIMM23, thereby promoting stabilization of PINK1. This chain is ADP/ATP translocase 1, found in Oryctolagus cuniculus (Rabbit).